Consider the following 266-residue polypeptide: Tryptophan synthase alpha chain (266 aa).

Active-site proton acceptor residues include E50 and D61.

Belongs to the TrpA family. As to quaternary structure, tetramer of two alpha and two beta chains.

It catalyses the reaction (1S,2R)-1-C-(indol-3-yl)glycerol 3-phosphate + L-serine = D-glyceraldehyde 3-phosphate + L-tryptophan + H2O. The protein operates within amino-acid biosynthesis; L-tryptophan biosynthesis; L-tryptophan from chorismate: step 5/5. Functionally, the alpha subunit is responsible for the aldol cleavage of indoleglycerol phosphate to indole and glyceraldehyde 3-phosphate. The chain is Tryptophan synthase alpha chain from Alkaliphilus metalliredigens (strain QYMF).